A 794-amino-acid chain; its full sequence is Protein argonaute-4 (794 aa).

A PAZ domain is found at 152 to 271; the sequence is PIIEFMCEVL…LPLEVCNIVA (120 aa). A Piwi domain is found at 442–753; that stretch reads LIVVILPGKT…VAFRARYHLV (312 aa). The disordered stretch occupies residues 758–779; it reads DSAEGSHVSGQSNGRDPQALAK.

It belongs to the argonaute family. Ago subfamily.

The protein localises to the cytoplasm. Its subcellular location is the P-body. Its function is as follows. Required for RNA-mediated gene silencing (RNAi). Binds to short RNAs such as microRNAs (miRNAs) and represses the translation of mRNAs which are complementary to them. Lacks endonuclease activity and does not appear to cleave target mRNAs. This chain is Protein argonaute-4 (AGO4), found in Gallus gallus (Chicken).